The sequence spans 81 residues: Sec-independent protein translocase protein TatA (81 aa).

Residues 1–21 (MGGISIWQLLIVALIVILLFG) traverse the membrane as a helical segment. A disordered region spans residues 34–81 (GAVKGFKNAMTPEDENKSLDDKEKDQTAATSQQAAEKQPETESKDKQA). Basic and acidic residues-rich tracts occupy residues 47–59 (DENK…EKDQ) and 70–81 (KQPETESKDKQA).

The protein belongs to the TatA/E family. In terms of assembly, the Tat system comprises two distinct complexes: a TatABC complex, containing multiple copies of TatA, TatB and TatC subunits, and a separate TatA complex, containing only TatA subunits. Substrates initially bind to the TatABC complex, which probably triggers association of the separate TatA complex to form the active translocon.

Its subcellular location is the cell inner membrane. Part of the twin-arginine translocation (Tat) system that transports large folded proteins containing a characteristic twin-arginine motif in their signal peptide across membranes. TatA could form the protein-conducting channel of the Tat system. This is Sec-independent protein translocase protein TatA from Shewanella frigidimarina (strain NCIMB 400).